Here is a 244-residue protein sequence, read N- to C-terminus: Probable transcriptional regulatory protein DR_2548 (244 aa).

A disordered region spans residues 1–23 (MAGHSKWAQIKRKKGANDKKRSA).

The protein belongs to the TACO1 family.

The protein resides in the cytoplasm. The protein is Probable transcriptional regulatory protein DR_2548 of Deinococcus radiodurans (strain ATCC 13939 / DSM 20539 / JCM 16871 / CCUG 27074 / LMG 4051 / NBRC 15346 / NCIMB 9279 / VKM B-1422 / R1).